Here is a 549-residue protein sequence, read N- to C-terminus: Limonene dehydrogenase subunit B (549 aa).

It belongs to the carotenoid/retinoid oxidoreductase family. As to quaternary structure, heterodimer composed of CtmA and CtmB. It depends on FAD as a cofactor.

It is found in the cytoplasm. It carries out the reaction (4S)-limonene + A + H2O = (4S)-perillyl alcohol + AH2. The catalysed reaction is (4R)-limonene + A + H2O = (4R)-perillyl alcohol + AH2. The protein operates within terpene metabolism; monoterpene degradation. Its activity is regulated as follows. The presence of molecular oxygen causes a 40% reduction in specific activity. In terms of biological role, involved in the degradation of the cyclic monoterpene limonene. Catalyzes the oxidation of limonene at the primary methyl group, forming perillyl alcohol. Hydroxylates the R- and S-enantiomers to their respective enantiomeric form of perillyl alcohol at a similar rate. Native CtmAB oxidizes a wide range of monocyclic monoterpenes containing the allylic methyl group motif (1-methyl-cyclohex-1-ene). Can also catalyze the reverse reaction, the reduction of perillyl alcohol to limonene, but with lower efficiency. Cannot use molecular oxygen as an electron acceptor. The natural electron acceptor is likely a heterodimeric electron transfer flavoprotein (ETF). The protein is Limonene dehydrogenase subunit B of Castellaniella defragrans (strain DSM 12143 / CCUG 39792 / 65Phen) (Alcaligenes defragrans).